A 179-amino-acid polypeptide reads, in one-letter code: Large ribosomal subunit protein uL5c (179 aa).

Belongs to the universal ribosomal protein uL5 family. Part of the 50S ribosomal subunit; contacts the 5S rRNA.

The protein resides in the plastid. It localises to the chloroplast. Functionally, binds 5S rRNA, forms part of the central protuberance of the 50S subunit. The sequence is that of Large ribosomal subunit protein uL5c (rpl5) from Gracilaria tenuistipitata var. liui (Red alga).